The sequence spans 133 residues: Putative actin-depolymerizing factor 11 (133 aa).

The ADF-H domain maps to 1–133 (MVLHDDCKLT…SLDAIRRRIN (133 aa)).

The protein belongs to the actin-binding proteins ADF family.

The protein resides in the cytoplasm. Its subcellular location is the cytoskeleton. Functionally, actin-depolymerizing protein. Severs actin filaments (F-actin) and binds to actin monomers. The protein is Putative actin-depolymerizing factor 11 (ADF11) of Arabidopsis thaliana (Mouse-ear cress).